A 304-amino-acid chain; its full sequence is Ribosomal RNA small subunit methyltransferase H (304 aa).

S-adenosyl-L-methionine-binding positions include 47–49 (GGH), Asp66, Phe93, Asp108, and Gln115.

Belongs to the methyltransferase superfamily. RsmH family.

Its subcellular location is the cytoplasm. It carries out the reaction cytidine(1402) in 16S rRNA + S-adenosyl-L-methionine = N(4)-methylcytidine(1402) in 16S rRNA + S-adenosyl-L-homocysteine + H(+). Specifically methylates the N4 position of cytidine in position 1402 (C1402) of 16S rRNA. In Prochlorococcus marinus (strain NATL1A), this protein is Ribosomal RNA small subunit methyltransferase H.